A 219-amino-acid polypeptide reads, in one-letter code: Mediator of RNA polymerase II transcription subunit 21 (219 aa).

The stretch at 86–125 (SAEEQLHKIDSLQKKLVDIEDEKIHAIKKKDDLLKQVDDL) forms a coiled coil. The interval 141-219 (SLAPENVQED…ISESISPGKI (79 aa)) is disordered. Basic and acidic residues-rich tracts occupy residues 166–181 (IEQKIANEKIESKIEG) and 191–204 (SDSKSADSELFMDK). A compositionally biased stretch (polar residues) spans 210–219 (ISESISPGKI).

The protein belongs to the Mediator complex subunit 21 family. In terms of assembly, component of the Mediator complex.

It localises to the nucleus. Component of the Mediator complex, a coactivator involved in the regulated transcription of nearly all RNA polymerase II-dependent genes. Mediator functions as a bridge to convey information from gene-specific regulatory proteins to the basal RNA polymerase II transcription machinery. Mediator is recruited to promoters by direct interactions with regulatory proteins and serves as a scaffold for the assembly of a functional preinitiation complex with RNA polymerase II and the general transcription factors. The chain is Mediator of RNA polymerase II transcription subunit 21 (SRB7) from Candida glabrata (strain ATCC 2001 / BCRC 20586 / JCM 3761 / NBRC 0622 / NRRL Y-65 / CBS 138) (Yeast).